The primary structure comprises 548 residues: Mannosyltransferase APTG1 (548 aa).

Residues 1 to 23 (MDIRKRKNAGGDGDGGADGASVN) form a disordered region. The next 3 helical transmembrane spans lie at 41–61 (IFLF…TYFN), 98–118 (LFAF…YIMI), and 146–166 (GNVA…FFCL). The N-linked (GlcNAc...) asparagine glycan is linked to Asn-167. The next 7 helical transmembrane spans lie at 169–189 (TFSN…WPCI), 204–224 (LVIA…WLYV), 238–258 (FIIL…CLLD), 260–280 (LMYG…FLSS), 294–314 (FTQG…AGII), 320–340 (KLSA…HKEF), and 342–362 (FVLP…AQME). An N-linked (GlcNAc...) asparagine glycan is attached at Asn-382. The helical transmembrane segment at 392-412 (LSVYFLLATNIPMALYMSLFH) threads the bilayer. An N-linked (GlcNAc...) asparagine glycan is attached at Asn-490.

Belongs to the glycosyltransferase 22 family. In terms of tissue distribution, mostly expressed, mainly in vascular tissues, in leaves, roots, stems, flowers, siliques and pollen, and, to a lower extent, in seedlings.

It localises to the endoplasmic reticulum membrane. Its function is as follows. Mannosyltransferase involved in glycosylphosphatidylinositol-anchor biosynthesis. Required for the pollen tube micropylar guidance and embryo development by regulating GPI-anchor mediated protein localization (e.g. COBL10 and A36). In Arabidopsis thaliana (Mouse-ear cress), this protein is Mannosyltransferase APTG1.